The primary structure comprises 441 residues: MGYGRDQQYNKSNFNSRGGDFRGDRSSDRNSYNRDRNDNFGQRGGNQGGRSFNQPQELIKPNWEEELPNLPVFEKNFYQEAESVKARSDQEINEFRREHEMTITGHDIPKPITSFDEAGFPDYVLEEVKAEGFEKPTGIQCQGWPMALSGRDMIGVAATGSGKTLSYCLPGIVHINAQPLLSPGDGPIVLVLAPTRELAVQIQKECSKFGSSSRIRNSCVYGGVPRGQQIRELSRGAEIVIATPGRLIDMLEIGKTNLKRVTYLVLDEADRMLDMGFEPQIRKIVDQIRPDRQTLMWSATWPKEVKQLAHDYLNDPIQVQIGSLELSASHNITQLVEVVSDFEKRDRLLKHLETASEDKDSKILVFASTKRTCDEVTKYLREDGWPALAIHGDKDQRERDWVLQEFREGRSPIMVATDVAARGIGMYTNFFFQFCIFFTTN.

The disordered stretch occupies residues 1 to 54 (MGYGRDQQYNKSNFNSRGGDFRGDRSSDRNSYNRDRNDNFGQRGGNQGGRSFNQ). The segment covering 7 to 16 (QQYNKSNFNS) has biased composition (polar residues). Positions 19–38 (GDFRGDRSSDRNSYNRDRND) are enriched in basic and acidic residues. Residues 113 to 141 (TSFDEAGFPDYVLEEVKAEGFEKPTGIQC) carry the Q motif motif. The Helicase ATP-binding domain maps to 144–319 (WPMALSGRDM…HDYLNDPIQV (176 aa)). Position 157 to 164 (157 to 164 (AATGSGKT)) interacts with ATP. The DEAD box motif lies at 267–270 (DEAD). Residues 347–441 (RLLKHLETAS…FQFCIFFTTN (95 aa)) form the Helicase C-terminal domain.

It belongs to the DEAD box helicase family. DDX5/DBP2 subfamily. Associates with polysomes.

Its subcellular location is the cytoplasm. It is found in the nucleus. It catalyses the reaction ATP + H2O = ADP + phosphate + H(+). Its function is as follows. ATP-dependent RNA helicase involved nonsense-mediated mRNA decay and ribosome biogenesis through rRNA processing. The chain is ATP-dependent RNA helicase DBP2 (DBP2) from Vanderwaltozyma polyspora (strain ATCC 22028 / DSM 70294 / BCRC 21397 / CBS 2163 / NBRC 10782 / NRRL Y-8283 / UCD 57-17) (Kluyveromyces polysporus).